The following is a 410-amino-acid chain: Peptidase T (410 aa).

His79 is a binding site for Zn(2+). Asp81 is an active-site residue. Asp142 contacts Zn(2+). Glu176 acts as the Proton acceptor in catalysis. Residues Glu177, Asp199, and His381 each coordinate Zn(2+).

The protein belongs to the peptidase M20B family. Zn(2+) is required as a cofactor.

The protein localises to the cytoplasm. It carries out the reaction Release of the N-terminal residue from a tripeptide.. Cleaves the N-terminal amino acid of tripeptides. The protein is Peptidase T of Bacillus pumilus (strain SAFR-032).